We begin with the raw amino-acid sequence, 67 residues long: Large ribosomal subunit protein uL29 (67 aa).

The protein belongs to the universal ribosomal protein uL29 family.

This is Large ribosomal subunit protein uL29 from Rubrobacter xylanophilus (strain DSM 9941 / JCM 11954 / NBRC 16129 / PRD-1).